A 271-amino-acid polypeptide reads, in one-letter code: Phosphatidylglycerol--prolipoprotein diacylglyceryl transferase (271 aa).

The next 7 helical transmembrane spans lie at 18-38, 60-80, 103-123, 137-157, 181-201, 209-229, and 236-256; these read IFGL…LVAL, YFIW…ILIY, FVGI…IATY, LDLV…GNFL, PSQL…LLLI, GELI…CEFF, and IGFV…MFLL. Arginine 152 lines the a 1,2-diacyl-sn-glycero-3-phospho-(1'-sn-glycerol) pocket.

Belongs to the Lgt family.

The protein resides in the cell inner membrane. It carries out the reaction L-cysteinyl-[prolipoprotein] + a 1,2-diacyl-sn-glycero-3-phospho-(1'-sn-glycerol) = an S-1,2-diacyl-sn-glyceryl-L-cysteinyl-[prolipoprotein] + sn-glycerol 1-phosphate + H(+). The protein operates within protein modification; lipoprotein biosynthesis (diacylglyceryl transfer). Functionally, catalyzes the transfer of the diacylglyceryl group from phosphatidylglycerol to the sulfhydryl group of the N-terminal cysteine of a prolipoprotein, the first step in the formation of mature lipoproteins. The sequence is that of Phosphatidylglycerol--prolipoprotein diacylglyceryl transferase from Campylobacter lari (strain RM2100 / D67 / ATCC BAA-1060).